The following is a 357-amino-acid chain: cAMP-responsive element modulator (357 aa).

Residues 101 to 160 (TVQVATIAETDDSADSEVIDSHKRREILSRRPSYRKILNELSSDVPGIPKIEEEKSEEEG) enclose the KID domain. Serine 116, serine 142, serine 284, serine 287, and serine 290 each carry phosphoserine. Residues 299–357 (TRKRELRLMKNREAAKECRRRKKEYVKCLESRVAVLEVQNKKLIEELETLKDICSPKTD) enclose the bZIP domain. The basic motif stretch occupies residues 300–325 (RKRELRLMKNREAAKECRRRKKEYVK). The tract at residues 327–348 (LESRVAVLEVQNKKLIEELETL) is leucine-zipper.

It belongs to the bZIP family. As to quaternary structure, binds DNA as a dimer. Interacts with CDC34. Interacts with FHL5. Isoform delta forms a heterodimer with CREB3L4. May interact with TSSK4. Stimulated by phosphorylation. Phosphorylated on Ser-116 by TSSK4 in vitro. Post-translationally, ubiquitinated by CDC34 and RAD6B in order to be degraded by the proteasome. Isoform Tau is expressed in testis germ cells. CREM-theta1- and CREM-theta2-containing isoforms are expressed in testis.

It localises to the nucleus. Functionally, transcriptional regulator that binds the cAMP response element (CRE), a sequence present in many viral and cellular promoters. Isoforms are either transcriptional activators or repressors. Isoform Delta is an activator. Plays a role in spermatogenesis and is involved in spermatid maturation. Binding of isoform Tau (activator) to CRE is increased by CREB3L4. The CREM isoform Tau-CREB3L4 heterodimer functions through CRE and may recruit HIRA to CRE to regulate histone exchange. This Rattus norvegicus (Rat) protein is cAMP-responsive element modulator (Crem).